We begin with the raw amino-acid sequence, 119 residues long: Large ribosomal subunit protein bL20 (119 aa).

This sequence belongs to the bacterial ribosomal protein bL20 family.

Functionally, binds directly to 23S ribosomal RNA and is necessary for the in vitro assembly process of the 50S ribosomal subunit. It is not involved in the protein synthesizing functions of that subunit. This is Large ribosomal subunit protein bL20 from Saccharophagus degradans (strain 2-40 / ATCC 43961 / DSM 17024).